Here is a 488-residue protein sequence, read N- to C-terminus: UDP-N-acetylmuramate--L-alanine ligase (488 aa).

Residue 126–132 coordinates ATP; that stretch reads GTHGKTT.

This sequence belongs to the MurCDEF family.

It localises to the cytoplasm. The enzyme catalyses UDP-N-acetyl-alpha-D-muramate + L-alanine + ATP = UDP-N-acetyl-alpha-D-muramoyl-L-alanine + ADP + phosphate + H(+). Its pathway is cell wall biogenesis; peptidoglycan biosynthesis. In terms of biological role, cell wall formation. The sequence is that of UDP-N-acetylmuramate--L-alanine ligase from Cronobacter sakazakii (strain ATCC BAA-894) (Enterobacter sakazakii).